Reading from the N-terminus, the 444-residue chain is 3-phosphoshikimate 1-carboxyvinyltransferase (444 aa).

3-phosphoshikimate contacts are provided by K29, S30, and R34. A phosphoenolpyruvate-binding site is contributed by K29. Positions 102 and 131 each coordinate phosphoenolpyruvate. Positions 176, 178, 326, and 353 each coordinate 3-phosphoshikimate. Q178 contributes to the phosphoenolpyruvate binding site. D326 (proton acceptor) is an active-site residue. R357 and R399 together coordinate phosphoenolpyruvate.

Belongs to the EPSP synthase family. In terms of assembly, monomer.

The protein localises to the cytoplasm. It carries out the reaction 3-phosphoshikimate + phosphoenolpyruvate = 5-O-(1-carboxyvinyl)-3-phosphoshikimate + phosphate. Its pathway is metabolic intermediate biosynthesis; chorismate biosynthesis; chorismate from D-erythrose 4-phosphate and phosphoenolpyruvate: step 6/7. Catalyzes the transfer of the enolpyruvyl moiety of phosphoenolpyruvate (PEP) to the 5-hydroxyl of shikimate-3-phosphate (S3P) to produce enolpyruvyl shikimate-3-phosphate and inorganic phosphate. The protein is 3-phosphoshikimate 1-carboxyvinyltransferase of Synechococcus sp. (strain JA-3-3Ab) (Cyanobacteria bacterium Yellowstone A-Prime).